We begin with the raw amino-acid sequence, 316 residues long: Aspartate carbamoyltransferase catalytic subunit (316 aa).

Arg-66 and Thr-67 together coordinate carbamoyl phosphate. Position 94 (Lys-94) interacts with L-aspartate. 3 residues coordinate carbamoyl phosphate: Arg-116, His-146, and Gln-149. L-aspartate is bound by residues Arg-180 and Arg-235. Carbamoyl phosphate is bound by residues Gly-276 and Pro-277.

This sequence belongs to the aspartate/ornithine carbamoyltransferase superfamily. ATCase family. In terms of assembly, heterododecamer (2C3:3R2) of six catalytic PyrB chains organized as two trimers (C3), and six regulatory PyrI chains organized as three dimers (R2).

The enzyme catalyses carbamoyl phosphate + L-aspartate = N-carbamoyl-L-aspartate + phosphate + H(+). It participates in pyrimidine metabolism; UMP biosynthesis via de novo pathway; (S)-dihydroorotate from bicarbonate: step 2/3. In terms of biological role, catalyzes the condensation of carbamoyl phosphate and aspartate to form carbamoyl aspartate and inorganic phosphate, the committed step in the de novo pyrimidine nucleotide biosynthesis pathway. The chain is Aspartate carbamoyltransferase catalytic subunit from Stenotrophomonas maltophilia (strain K279a).